The following is a 262-amino-acid chain: 1-(5-phosphoribosyl)-5-[(5-phosphoribosylamino)methylideneamino] imidazole-4-carboxamide isomerase (262 aa).

The active-site Proton acceptor is the Asp8. Catalysis depends on Asp129, which acts as the Proton donor. The segment at 243-262 is disordered; it reads KDNVGQEDHSLPRCEPGPRG.

The protein belongs to the HisA/HisF family.

It localises to the cytoplasm. The enzyme catalyses 1-(5-phospho-beta-D-ribosyl)-5-[(5-phospho-beta-D-ribosylamino)methylideneamino]imidazole-4-carboxamide = 5-[(5-phospho-1-deoxy-D-ribulos-1-ylimino)methylamino]-1-(5-phospho-beta-D-ribosyl)imidazole-4-carboxamide. It participates in amino-acid biosynthesis; L-histidine biosynthesis; L-histidine from 5-phospho-alpha-D-ribose 1-diphosphate: step 4/9. The sequence is that of 1-(5-phosphoribosyl)-5-[(5-phosphoribosylamino)methylideneamino] imidazole-4-carboxamide isomerase from Desulforudis audaxviator (strain MP104C).